The sequence spans 73 residues: Defensin-like protein 87 (73 aa).

A signal peptide spans 1–27 (MTTKKTSSVVLPLLLVFALILMPMVAG). 3 cysteine pairs are disulfide-bonded: cysteine 33–cysteine 71, cysteine 45–cysteine 69, and cysteine 49–cysteine 70.

Belongs to the DEFL family.

It localises to the secreted. The polypeptide is Defensin-like protein 87 (Arabidopsis thaliana (Mouse-ear cress)).